We begin with the raw amino-acid sequence, 424 residues long: Histidine--tRNA ligase (424 aa).

Belongs to the class-II aminoacyl-tRNA synthetase family. As to quaternary structure, homodimer.

It is found in the cytoplasm. It carries out the reaction tRNA(His) + L-histidine + ATP = L-histidyl-tRNA(His) + AMP + diphosphate + H(+). This chain is Histidine--tRNA ligase, found in Salmonella paratyphi B (strain ATCC BAA-1250 / SPB7).